We begin with the raw amino-acid sequence, 323 residues long: HPr kinase/phosphorylase (323 aa).

Active-site residues include His-146 and Lys-167. ATP is bound at residue 161–168; that stretch reads GESGLGKS. Ser-168 contacts Mg(2+). Residue Asp-185 is the Proton acceptor; for phosphorylation activity. Proton donor; for dephosphorylation activity of the active site. The tract at residues 209-218 is important for the catalytic mechanism of both phosphorylation and dephosphorylation; that stretch reads LEVRGLGLLD. Glu-210 contacts Mg(2+). Arg-250 is an active-site residue. Residues 271–276 are important for the catalytic mechanism of dephosphorylation; the sequence is QVAAGR.

It belongs to the HPrK/P family. In terms of assembly, homohexamer. Mg(2+) is required as a cofactor.

It catalyses the reaction [HPr protein]-L-serine + ATP = [HPr protein]-O-phospho-L-serine + ADP + H(+). The enzyme catalyses [HPr protein]-O-phospho-L-serine + phosphate + H(+) = [HPr protein]-L-serine + diphosphate. Functionally, catalyzes the ATP- as well as the pyrophosphate-dependent phosphorylation of a specific serine residue in HPr, a phosphocarrier protein of the phosphoenolpyruvate-dependent sugar phosphotransferase system (PTS). HprK/P also catalyzes the pyrophosphate-producing, inorganic phosphate-dependent dephosphorylation (phosphorolysis) of seryl-phosphorylated HPr (P-Ser-HPr). This chain is HPr kinase/phosphorylase, found in Cupriavidus pinatubonensis (strain JMP 134 / LMG 1197) (Cupriavidus necator (strain JMP 134)).